The chain runs to 49 residues: Sperm protamine P1 (49 aa).

The protein belongs to the protamine P1 family. As to expression, testis.

The protein resides in the nucleus. It is found in the chromosome. Functionally, protamines substitute for histones in the chromatin of sperm during the haploid phase of spermatogenesis. They compact sperm DNA into a highly condensed, stable and inactive complex. The polypeptide is Sperm protamine P1 (PRM1) (Pteropus hypomelanus (Island flying fox)).